A 312-amino-acid chain; its full sequence is Malate dehydrogenase (312 aa).

Residues Gly-7–Gly-13 and Asp-34 each bind NAD(+). Substrate is bound by residues Arg-81 and Arg-87. NAD(+) contacts are provided by residues Asn-94 and Ile-117–Asn-119. Residues Asn-119 and Arg-153 each coordinate substrate. His-177 acts as the Proton acceptor in catalysis. Met-227 contacts NAD(+).

The protein belongs to the LDH/MDH superfamily. MDH type 1 family. As to quaternary structure, homodimer.

It catalyses the reaction (S)-malate + NAD(+) = oxaloacetate + NADH + H(+). In terms of biological role, catalyzes the reversible oxidation of malate to oxaloacetate. This chain is Malate dehydrogenase, found in Salmonella arizonae (strain ATCC BAA-731 / CDC346-86 / RSK2980).